A 157-amino-acid chain; its full sequence is MSRKSKKIKKKVFKDSKYNSQVIAKFVNRMMFDGKKSISETIVYNSIDMLAEKIEEVDKIAAFNKALDNVKPLVEVRSRRVGGATYQVPVEVREERREALAMKWIISAARKASGKSMQEKLANEFVNSYNSTGAAFKKREDTHRMAEANRAFTHYRW.

Belongs to the universal ribosomal protein uS7 family. Part of the 30S ribosomal subunit. Contacts proteins S9 and S11.

Its function is as follows. One of the primary rRNA binding proteins, it binds directly to 16S rRNA where it nucleates assembly of the head domain of the 30S subunit. Is located at the subunit interface close to the decoding center, probably blocks exit of the E-site tRNA. The protein is Small ribosomal subunit protein uS7 of Borrelia hermsii (strain HS1 / DAH).